The following is a 1070-amino-acid chain: DNA-directed RNA polymerase subunit beta (1070 aa).

This sequence belongs to the RNA polymerase beta chain family. In plastids the minimal PEP RNA polymerase catalytic core is composed of four subunits: alpha, beta, beta', and beta''. When a (nuclear-encoded) sigma factor is associated with the core the holoenzyme is formed, which can initiate transcription.

Its subcellular location is the plastid. It is found in the chloroplast. The enzyme catalyses RNA(n) + a ribonucleoside 5'-triphosphate = RNA(n+1) + diphosphate. DNA-dependent RNA polymerase catalyzes the transcription of DNA into RNA using the four ribonucleoside triphosphates as substrates. The protein is DNA-directed RNA polymerase subunit beta of Populus alba (White poplar).